The sequence spans 183 residues: Alkyl hydroperoxide reductase AhpD (183 aa).

Cys-132 (proton donor) is an active-site residue. An intrachain disulfide couples Cys-132 to Cys-135. Cys-135 acts as the Cysteine sulfenic acid (-SOH) intermediate in catalysis.

Belongs to the AhpD family.

It carries out the reaction N(6)-[(R)-dihydrolipoyl]-L-lysyl-[lipoyl-carrier protein] + a hydroperoxide = N(6)-[(R)-lipoyl]-L-lysyl-[lipoyl-carrier protein] + an alcohol + H2O. Functionally, antioxidant protein with alkyl hydroperoxidase activity. Required for the reduction of the AhpC active site cysteine residues and for the regeneration of the AhpC enzyme activity. The protein is Alkyl hydroperoxide reductase AhpD of Acidobacterium capsulatum (strain ATCC 51196 / DSM 11244 / BCRC 80197 / JCM 7670 / NBRC 15755 / NCIMB 13165 / 161).